Here is a 147-residue protein sequence, read N- to C-terminus: MRSMTLFILFVSIIALLFLLINLVFAPHIPYQEKNSEFECGFHSFHQTRFPFDSPIAAQAICFVILDLEIFTMFPYVGSLGINTFYSLVVILGFMFVVSAGFVFELGKGALKIDSKQNMGGDSTHLELKNLKDISSLNLCPPSAFKN.

A run of 3 helical transmembrane segments spans residues 6–26 (LFIL…LVFA), 60–80 (AICF…VGSL), and 84–104 (TFYS…GFVF).

The protein belongs to the complex I subunit 3 family.

It localises to the mitochondrion membrane. The enzyme catalyses a ubiquinone + NADH + 5 H(+)(in) = a ubiquinol + NAD(+) + 4 H(+)(out). Its function is as follows. Core subunit of the mitochondrial membrane respiratory chain NADH dehydrogenase (Complex I) that is believed to belong to the minimal assembly required for catalysis. Complex I functions in the transfer of electrons from NADH to the respiratory chain. The immediate electron acceptor for the enzyme is believed to be ubiquinone. This chain is NADH-ubiquinone oxidoreductase chain 3 (ndh-3), found in Neurospora crassa (strain ATCC 24698 / 74-OR23-1A / CBS 708.71 / DSM 1257 / FGSC 987).